The primary structure comprises 364 residues: tRNA 2-selenouridine synthase (364 aa).

A Rhodanese domain is found at 14–137; the sequence is LLADTPLIDV…LRQTAIQATW (124 aa). Residue Cys-97 is the S-selanylcysteine intermediate of the active site.

The protein belongs to the SelU family. In terms of assembly, monomer.

It carries out the reaction 5-methylaminomethyl-2-thiouridine(34) in tRNA + selenophosphate + (2E)-geranyl diphosphate + H2O + H(+) = 5-methylaminomethyl-2-selenouridine(34) in tRNA + (2E)-thiogeraniol + phosphate + diphosphate. The enzyme catalyses 5-methylaminomethyl-2-thiouridine(34) in tRNA + (2E)-geranyl diphosphate = 5-methylaminomethyl-S-(2E)-geranyl-thiouridine(34) in tRNA + diphosphate. It catalyses the reaction 5-methylaminomethyl-S-(2E)-geranyl-thiouridine(34) in tRNA + selenophosphate + H(+) = 5-methylaminomethyl-2-(Se-phospho)selenouridine(34) in tRNA + (2E)-thiogeraniol. The catalysed reaction is 5-methylaminomethyl-2-(Se-phospho)selenouridine(34) in tRNA + H2O = 5-methylaminomethyl-2-selenouridine(34) in tRNA + phosphate. In terms of biological role, involved in the post-transcriptional modification of the uridine at the wobble position (U34) of tRNA(Lys), tRNA(Glu) and tRNA(Gln). Catalyzes the conversion of 2-thiouridine (S2U-RNA) to 2-selenouridine (Se2U-RNA). Acts in a two-step process involving geranylation of 2-thiouridine (S2U) to S-geranyl-2-thiouridine (geS2U) and subsequent selenation of the latter derivative to 2-selenouridine (Se2U) in the tRNA chain. This is tRNA 2-selenouridine synthase from Salmonella gallinarum (strain 287/91 / NCTC 13346).